The primary structure comprises 265 residues: Tryptophan synthase alpha chain (265 aa).

Active-site proton acceptor residues include Glu-41 and Asp-52.

It belongs to the TrpA family. Tetramer of two alpha and two beta chains.

It carries out the reaction (1S,2R)-1-C-(indol-3-yl)glycerol 3-phosphate + L-serine = D-glyceraldehyde 3-phosphate + L-tryptophan + H2O. It functions in the pathway amino-acid biosynthesis; L-tryptophan biosynthesis; L-tryptophan from chorismate: step 5/5. The alpha subunit is responsible for the aldol cleavage of indoleglycerol phosphate to indole and glyceraldehyde 3-phosphate. The protein is Tryptophan synthase alpha chain of Bacillus velezensis (strain DSM 23117 / BGSC 10A6 / LMG 26770 / FZB42) (Bacillus amyloliquefaciens subsp. plantarum).